Here is a 346-residue protein sequence, read N- to C-terminus: Methylthioribose-1-phosphate isomerase (346 aa).

Substrate is bound by residues 46 to 48 (RGA), R89, and Q196. The active-site Proton donor is the D237. 247-248 (NK) is a substrate binding site.

Belongs to the eIF-2B alpha/beta/delta subunits family. MtnA subfamily.

It catalyses the reaction 5-(methylsulfanyl)-alpha-D-ribose 1-phosphate = 5-(methylsulfanyl)-D-ribulose 1-phosphate. It participates in amino-acid biosynthesis; L-methionine biosynthesis via salvage pathway; L-methionine from S-methyl-5-thio-alpha-D-ribose 1-phosphate: step 1/6. In terms of biological role, catalyzes the interconversion of methylthioribose-1-phosphate (MTR-1-P) into methylthioribulose-1-phosphate (MTRu-1-P). The sequence is that of Methylthioribose-1-phosphate isomerase from Geobacter sulfurreducens (strain ATCC 51573 / DSM 12127 / PCA).